A 269-amino-acid polypeptide reads, in one-letter code: Regulatory protein RecX (269 aa).

It belongs to the RecX family.

Its subcellular location is the cytoplasm. Modulates RecA activity. The polypeptide is Regulatory protein RecX (Lactococcus lactis subsp. cremoris (strain SK11)).